The primary structure comprises 156 residues: Arginine repressor (156 aa).

It belongs to the ArgR family.

The protein localises to the cytoplasm. It participates in amino-acid biosynthesis; L-arginine biosynthesis [regulation]. Functionally, regulates arginine biosynthesis genes. This chain is Arginine repressor, found in Tolumonas auensis (strain DSM 9187 / NBRC 110442 / TA 4).